Reading from the N-terminus, the 484-residue chain is Coronin-1B (484 aa).

At serine 2 the chain carries Phosphoserine. WD repeat units lie at residues 80 to 120 (GHTG…LTSP), 130 to 170 (GHTK…ELYR), 174 to 213 (LHPD…LVAE), 217 to 260 (AHEG…EPMA), and 265 to 305 (DSSN…PYIH). The tract at residues 404–446 (LKVSRRNVLSDSRPASYSRSGASTATAVTDVPSGNLAGAGEAG) is disordered. Over residues 410-430 (NVLSDSRPASYSRSGASTATA) the composition is skewed to polar residues. Residues 444-482 (EAGKLEEVMQELRALRMLVKEQGERISRLEEQLGRMENG) adopt a coiled-coil conformation.

Belongs to the WD repeat coronin family. As to quaternary structure, forms homooligomers, but does not form complexes with the other coronins. Interacts with Arp2/3 complex components, including ACTR2, ARPC1B and ARPC2. Binds actin. Phosphorylation on Ser-2 regulates the interaction with the Arp2/3 complex and cell motility in fibroblasts. Phosphorylation does not seem to affect subcellular location. In terms of tissue distribution, ubiquitous.

The protein localises to the cytoplasm. Its subcellular location is the cytoskeleton. It localises to the stress fiber. In terms of biological role, regulates leading edge dynamics and cell motility in fibroblasts. May be involved in cytokinesis and signal transduction. The polypeptide is Coronin-1B (Coro1b) (Mus musculus (Mouse)).